The chain runs to 87 residues: Guanine nucleotide-binding protein subunit gamma (87 aa).

Cysteine 84 bears the Cysteine methyl ester mark. A lipid anchor (S-geranylgeranyl cysteine) is attached at cysteine 84. The propeptide at 85 to 87 (LLV) is removed in mature form.

This sequence belongs to the G protein gamma family. In terms of assembly, g proteins are composed of 3 units, alpha, beta and gamma. The N-terminus is blocked.

The protein localises to the cell membrane. In terms of biological role, guanine nucleotide-binding proteins (G proteins) are involved as a modulator or transducer in various transmembrane signaling systems. This major G-protein of the squid photoreceptor is involved in visual transduction. The beta and gamma chains are required for the GTPase activity, for replacement of GDP by GTP, and for G protein-effector interaction. The chain is Guanine nucleotide-binding protein subunit gamma from Loligo forbesii (Veined squid).